Reading from the N-terminus, the 402-residue chain is 2,3-bisphosphoglycerate-independent phosphoglycerate mutase 2 (402 aa).

It belongs to the BPG-independent phosphoglycerate mutase family. A-PGAM subfamily.

The enzyme catalyses (2R)-2-phosphoglycerate = (2R)-3-phosphoglycerate. Its pathway is carbohydrate degradation; glycolysis; pyruvate from D-glyceraldehyde 3-phosphate: step 3/5. Catalyzes the interconversion of 2-phosphoglycerate and 3-phosphoglycerate. This is 2,3-bisphosphoglycerate-independent phosphoglycerate mutase 2 (apgM2) from Methanothermobacter thermautotrophicus (strain ATCC 29096 / DSM 1053 / JCM 10044 / NBRC 100330 / Delta H) (Methanobacterium thermoautotrophicum).